Reading from the N-terminus, the 131-residue chain is Large ribosomal subunit protein bL17 (131 aa).

Belongs to the bacterial ribosomal protein bL17 family. Part of the 50S ribosomal subunit. Contacts protein L32.

The chain is Large ribosomal subunit protein bL17 from Shewanella oneidensis (strain ATCC 700550 / JCM 31522 / CIP 106686 / LMG 19005 / NCIMB 14063 / MR-1).